The sequence spans 257 residues: Phosphate import ATP-binding protein PstB (257 aa).

The ABC transporter domain maps to 4–252; it reads LKLNDVNIYY…PDNKETEDYI (249 aa). 36–43 serves as a coordination point for ATP; the sequence is GPSGCGKS.

It belongs to the ABC transporter superfamily. Phosphate importer (TC 3.A.1.7) family. As to quaternary structure, the complex is composed of two ATP-binding proteins (PstB), two transmembrane proteins (PstC and PstA) and a solute-binding protein (PstS).

It localises to the cell membrane. The catalysed reaction is phosphate(out) + ATP + H2O = ADP + 2 phosphate(in) + H(+). Part of the ABC transporter complex PstSACB involved in phosphate import. Responsible for energy coupling to the transport system. This chain is Phosphate import ATP-binding protein PstB, found in Corynebacterium efficiens (strain DSM 44549 / YS-314 / AJ 12310 / JCM 11189 / NBRC 100395).